Consider the following 1264-residue polypeptide: Kinesin-like protein KIN-14B (1264 aa).

The segment covering 1 to 10 (MAEQKSTNMW) has biased composition (polar residues). A disordered region spans residues 1-52 (MAEQKSTNMWNWEVTGFESKKSPSSEEGVHRTPSSMLRRYSIPKNSLPPHSS). The span at 18–30 (ESKKSPSSEEGVH) shows a compositional bias: basic and acidic residues. Positions 53–84 (ELASKVQSLKDKVQLAKDDYVGLRQEATDLQE) form a coiled coil. In terms of domain architecture, Kinesin motor spans 138–452 (NVKVFCRARP…LNYAARARNT (315 aa)). Residue 219–226 (GQTHAGKT) participates in ATP binding. Coiled-coil stretches lie at residues 462–511 (IKKW…YNEV), 545–592 (QLRN…LKSD), and 617–640 (TKKL…ENEK). The interval 588 to 615 (ALKSDMTRSRDPLEPQPRAAENTLDSSA) is disordered. Residues 589–600 (LKSDMTRSRDPL) are compositionally biased toward basic and acidic residues. Over residues 652–668 (SSTQVSSPSSKASPTVQ) the composition is skewed to low complexity. Disordered stretches follow at residues 652 to 684 (SSTQ…SVDK) and 1117 to 1136 (PEQE…SISS).

It belongs to the TRAFAC class myosin-kinesin ATPase superfamily. Kinesin family. KIN-14 subfamily. In terms of assembly, homodimer and heterodimer with KCA1. Interacts with CDKA-1. Interacts with At4g14310. As to expression, expressed in roots, leaves, stems and flowers.

It is found in the cell membrane. Kinesin-like protein required for chloroplast movements and anchor to the plasma membrane. Mediates chloroplast movement via chloroplast actin (cp-actin) filaments. Required for the chloroplast avoidance response under high intensity blue light. Mediates redundantly with CHUP1 the nuclear avoidance response under high intensity blue light. May be involved in division plane determination. The protein is Kinesin-like protein KIN-14B of Arabidopsis thaliana (Mouse-ear cress).